A 434-amino-acid chain; its full sequence is Methylenetetrahydrofolate--tRNA-(uracil-5-)-methyltransferase TrmFO (434 aa).

An FAD-binding site is contributed by 9 to 14; sequence GAGLAG.

The protein belongs to the MnmG family. TrmFO subfamily. It depends on FAD as a cofactor.

The protein localises to the cytoplasm. It catalyses the reaction uridine(54) in tRNA + (6R)-5,10-methylene-5,6,7,8-tetrahydrofolate + NADH + H(+) = 5-methyluridine(54) in tRNA + (6S)-5,6,7,8-tetrahydrofolate + NAD(+). The enzyme catalyses uridine(54) in tRNA + (6R)-5,10-methylene-5,6,7,8-tetrahydrofolate + NADPH + H(+) = 5-methyluridine(54) in tRNA + (6S)-5,6,7,8-tetrahydrofolate + NADP(+). Its function is as follows. Catalyzes the folate-dependent formation of 5-methyl-uridine at position 54 (M-5-U54) in all tRNAs. The chain is Methylenetetrahydrofolate--tRNA-(uracil-5-)-methyltransferase TrmFO from Bacillus pumilus (strain SAFR-032).